A 157-amino-acid chain; its full sequence is Large ribosomal subunit protein eL29 (157 aa).

Residues 1 to 26 (MAKSKNHTTHNQSRKWHRNGIKKPRS) are compositionally biased toward basic residues. A disordered region spans residues 1-32 (MAKSKNHTTHNQSRKWHRNGIKKPRSQRYESL). Lys-5 is subject to N6-methyllysine. The residue at position 31 (Ser-31) is a Phosphoserine. N6-acetyllysine is present on Lys-33. A disordered region spans residues 121–157 (PKAKAKAKDQTKAQAAAPASIPAQAPKGAQATTKATE). The span at 132-147 (KAQAAAPASIPAQAPK) shows a compositional bias: low complexity. Residue Ser-140 is modified to Phosphoserine.

It belongs to the eukaryotic ribosomal protein eL29 family. Component of the large ribosomal subunit.

The protein localises to the cytoplasm. Functionally, component of the large ribosomal subunit. The ribosome is a large ribonucleoprotein complex responsible for the synthesis of proteins in the cell. This is Large ribosomal subunit protein eL29 (RPL29) from Macaca fascicularis (Crab-eating macaque).